An 87-amino-acid chain; its full sequence is Phosphoribosyl-ATP pyrophosphatase (87 aa).

It belongs to the PRA-PH family.

Its subcellular location is the cytoplasm. It carries out the reaction 1-(5-phospho-beta-D-ribosyl)-ATP + H2O = 1-(5-phospho-beta-D-ribosyl)-5'-AMP + diphosphate + H(+). Its pathway is amino-acid biosynthesis; L-histidine biosynthesis; L-histidine from 5-phospho-alpha-D-ribose 1-diphosphate: step 2/9. In Thermobifida fusca (strain YX), this protein is Phosphoribosyl-ATP pyrophosphatase.